Consider the following 886-residue polypeptide: DNA mismatch repair protein MutS (886 aa).

ATP is bound at residue 626 to 633 (GPNMGGKS).

Belongs to the DNA mismatch repair MutS family.

Its function is as follows. This protein is involved in the repair of mismatches in DNA. It is possible that it carries out the mismatch recognition step. This protein has a weak ATPase activity. In Burkholderia ambifaria (strain ATCC BAA-244 / DSM 16087 / CCUG 44356 / LMG 19182 / AMMD) (Burkholderia cepacia (strain AMMD)), this protein is DNA mismatch repair protein MutS.